The following is a 243-amino-acid chain: MKYSIASMKVTLFFYFLCAKNIASLKYTKSNLSFLYNGCDNINSGGVNAHRNKTTVQTKNKHSKLKILSLNEKQDEELHYELNPENTEKVLNLIRPKLQIDNGDVELVDIKGNDLYIRLLGNCITCSSNSVTVSQVIKKTLKMYIRGPGNKEPNVIIINFDEINEENILNCLSDLKPYFDFLKIKLVIKEMINNKENINNSVMLVFKNIENEDKEVNIPHNIKTEITGRLKQNFPTLTVNFEN.

This sequence belongs to the NifU family. As to quaternary structure, homodimer.

The protein localises to the plastid. It is found in the apicoplast. Its pathway is cofactor biosynthesis; iron-sulfur cluster biosynthesis. Functionally, binds and transfers [4Fe-4S] iron-sulfur clusters to target proteins. The sequence is that of NifU-like scaffold protein from Plasmodium berghei (strain Anka).